Consider the following 474-residue polypeptide: Proline--tRNA ligase (474 aa).

It belongs to the class-II aminoacyl-tRNA synthetase family. ProS type 3 subfamily. In terms of assembly, homodimer.

It is found in the cytoplasm. The enzyme catalyses tRNA(Pro) + L-proline + ATP = L-prolyl-tRNA(Pro) + AMP + diphosphate. Catalyzes the attachment of proline to tRNA(Pro) in a two-step reaction: proline is first activated by ATP to form Pro-AMP and then transferred to the acceptor end of tRNA(Pro). This chain is Proline--tRNA ligase, found in Phytoplasma australiense.